The following is a 236-amino-acid chain: Ribose-5-phosphate isomerase A 2 (236 aa).

Substrate-binding positions include 31 to 34 (SGTT), 86 to 89 (DGPD), and 99 to 102 (KGGG). The active-site Proton acceptor is the Glu-108. Lys-126 contacts substrate.

The protein belongs to the ribose 5-phosphate isomerase family. Homodimer.

The enzyme catalyses aldehydo-D-ribose 5-phosphate = D-ribulose 5-phosphate. It functions in the pathway carbohydrate degradation; pentose phosphate pathway; D-ribose 5-phosphate from D-ribulose 5-phosphate (non-oxidative stage): step 1/1. Its function is as follows. Catalyzes the reversible conversion of ribose-5-phosphate to ribulose 5-phosphate. This Yersinia pestis protein is Ribose-5-phosphate isomerase A 2.